Here is a 333-residue protein sequence, read N- to C-terminus: Probable siderophore transport system permease protein YfiZ (333 aa).

Residues 1–31 form the signal peptide; the sequence is MICKKASSKWIVLVCLIFILLTAVCASVVYG. 8 helical membrane-spanning segments follow: residues 64-84, 94-114, 119-139, 152-172, 193-213, 246-266, 280-300, and 303-323; these read ALVA…MQAL, IFGI…FLHI, ALVW…YAAG, TLAG…LLSV, LDLL…CFFL, VMLA…GIII, WVLP…DIGA, and IIMP…MPVF.

This sequence belongs to the binding-protein-dependent transport system permease family. FecCD subfamily. The complex is composed of one ATP-binding protein (YusV), two transmembrane proteins (YfiZ and YfhA) and a solute-binding protein (YfiY).

The protein resides in the cell membrane. In terms of biological role, part of the ABC transporter complex YfiYZ/YfhA/YusV involved in import of the iron-hydroxamate siderophores schizokinen, arthrobactin and corprogen. The protein is Probable siderophore transport system permease protein YfiZ (yfiZ) of Bacillus subtilis (strain 168).